A 140-amino-acid chain; its full sequence is Mialostatin (140 aa).

An N-terminal signal peptide occupies residues 1-18; that stretch reads MAFFKSAVFLVCVVLAAA. 2 cysteine pairs are disulfide-bonded: Cys90-Cys103 and Cys114-Cys134.

It belongs to the cystatin family. As to expression, expressed in midgut (at protein level).

It localises to the secreted. Functionally, inhibitor of cysteine proteinases. Inhibits several endogenous midgut digestive cysteine proteases, such as cathepsin L1, L3, B and C, but not aspartic protease cathepsin D1 and cysteine protease legumain. Inhibits proteolysis of blood proteins catalyzed by tick gut cysteine cathepsins. Inhibits host cathepsin B (CSTB), C (CTSC), H (CTSH), K (CTSK), L (CTSL) and S (CTSS). In Ixodes ricinus (Common tick), this protein is Mialostatin.